The sequence spans 199 residues: MAP6 domain-containing protein 1 (199 aa).

3 S-palmitoyl cysteine lipidation sites follow: cysteine 5, cysteine 10, and cysteine 11. A disordered region spans residues 33–110 (YSDLDSEEPG…SAQSSAPPAP (78 aa)). Serine 38 is subject to Phosphoserine. Mn regions lie at residues 130-143 (TTSYRQEFQAWTGV) and 165-177 (DSSPGAGFQVPEV). Serine 167 is subject to Phosphoserine.

It belongs to the STOP family. In terms of assembly, interacts with calmodulin. Post-translationally, palmitoylated. Palmitoylation enhances association with microtubules.

It localises to the golgi apparatus. The protein resides in the cytoplasm. It is found in the cytoskeleton. May have microtubule-stabilizing activity. This Homo sapiens (Human) protein is MAP6 domain-containing protein 1 (MAP6D1).